The following is a 129-amino-acid chain: MSKVQEILEAVKGLTVLELSELVKAFEEEFGVSAAAPVAVAAAPGAAAAPAAPAAAEEEQTEFDVILTAVGDKKVNVIKVVREITGLGLKEAKDLVDGAPKPVKEKVSKEEAAAIKAKLTEAGATVEVK.

It belongs to the bacterial ribosomal protein bL12 family. As to quaternary structure, homodimer. Part of the ribosomal stalk of the 50S ribosomal subunit. Forms a multimeric L10(L12)X complex, where L10 forms an elongated spine to which 2 to 4 L12 dimers bind in a sequential fashion. Binds GTP-bound translation factors.

Functionally, forms part of the ribosomal stalk which helps the ribosome interact with GTP-bound translation factors. Is thus essential for accurate translation. The sequence is that of Large ribosomal subunit protein bL12 from Pelotomaculum thermopropionicum (strain DSM 13744 / JCM 10971 / SI).